The primary structure comprises 296 residues: Gamma-D-glutamyl-L-lysine dipeptidyl-peptidase (296 aa).

Substrate-binding positions include Tyr-90, Asp-199–Ser-201, and Asp-218–Ala-219. A NlpC/P60 domain is found at Lys-170 to Ser-295. The active-site Nucleophile is Cys-200. Catalysis depends on His-253, which acts as the Proton acceptor. His-265 is an active-site residue.

The protein belongs to the peptidase C40 family.

The enzyme catalyses The enzyme releases L-Ala-gamma-D-Glu dipeptides from cell wall peptides via cleavage of an L-Ala-gamma-D-Glu-|-L-Lys bond.. It functions in the pathway cell wall degradation; peptidoglycan degradation. Specifically hydrolyzes gamma-D-glutamyl-L-lysine bonds in murein peptides, releasing L-Ala-D-Glu. In Bacillus subtilis (strain 168), this protein is Gamma-D-glutamyl-L-lysine dipeptidyl-peptidase (ykfC).